The sequence spans 620 residues: Glutathione-regulated potassium-efflux system protein KefC (620 aa).

12 consecutive transmembrane segments (helical) span residues 4–24 (HTLIQALIYLGSAALIVPIAV), 26–46 (LGLGSVLGYLIAGCIIGPWGL), 54–74 (SILHFAEIGVVLMLFIIGLEL), 90–110 (GALQMVICGGLLGLFCMLLGL), 114–134 (VAELIGMTLALSSTAIAMQAM), 149–169 (FAVLLFQDIAAIPLVAMIPLL), 178–198 (MGAFVLSALKVAGALALVVLL), 218–238 (VFSAVALFLVFGFGLLLEEVG), 270–290 (GLLLGLFFIGVGMSIDFGTLI), 294–314 (LRIVILLLGFLIIKIAMLWLI), 327–347 (WFAVLLGQGSEFAFVVFGAAQ), and 359–379 (SLTLAVALSMAATPILLVILN). In terms of domain architecture, RCK N-terminal spans 399–518 (QPRVIIAGFG…AGVEKPERET (120 aa)). The interval 597-620 (GWQGTEEGKHTGNMADEPETKPSS) is disordered.

It belongs to the monovalent cation:proton antiporter 2 (CPA2) transporter (TC 2.A.37) family. KefC subfamily. As to quaternary structure, homodimer. Interacts with the regulatory subunit KefF.

The protein resides in the cell inner membrane. Pore-forming subunit of a potassium efflux system that confers protection against electrophiles. Catalyzes K(+)/H(+) antiport. The sequence is that of Glutathione-regulated potassium-efflux system protein KefC from Escherichia coli O45:K1 (strain S88 / ExPEC).